Here is a 209-residue protein sequence, read N- to C-terminus: Uridine kinase (209 aa).

Position 12-19 (12-19 (GGSGSGKT)) interacts with ATP.

The protein belongs to the uridine kinase family.

Its subcellular location is the cytoplasm. It carries out the reaction uridine + ATP = UMP + ADP + H(+). It catalyses the reaction cytidine + ATP = CMP + ADP + H(+). The protein operates within pyrimidine metabolism; CTP biosynthesis via salvage pathway; CTP from cytidine: step 1/3. It functions in the pathway pyrimidine metabolism; UMP biosynthesis via salvage pathway; UMP from uridine: step 1/1. This is Uridine kinase from Listeria innocua serovar 6a (strain ATCC BAA-680 / CLIP 11262).